Consider the following 342-residue polypeptide: Inactive chitinase-like protein 2 (342 aa).

Residues 1–19 (MKEIVRALEGYGPPKDKAA) form the signal peptide. One can recognise a Chitin-binding type-1 domain in the interval 20–60 (EQCGWQAGGALCPGGLCCSQYGWCANTPEYCGSGCQSQCDG). 7 disulfides stabilise this stretch: C22–C37, C31–C43, C36–C80, C84–C88, C122–C184, C196–C204, and C301–C333.

The protein belongs to the glycosyl hydrolase 19 family. Chitinase class I subfamily.

Functionally, inactive chitinase-like protein that does not exhibit hydrolytic activity toward chitin. Binds strongly to chitin and possesses antifungal activity toward the fungal pathogen Altenaria alternata in plate assays. Probably involved in defense against fungal pathogens through a mechanism that only involves carbohydrate binding. This Hevea brasiliensis (Para rubber tree) protein is Inactive chitinase-like protein 2.